Here is an 83-residue protein sequence, read N- to C-terminus: Cell division topological specificity factor (83 aa).

It belongs to the MinE family.

Functionally, prevents the cell division inhibition by proteins MinC and MinD at internal division sites while permitting inhibition at polar sites. This ensures cell division at the proper site by restricting the formation of a division septum at the midpoint of the long axis of the cell. This Buchnera aphidicola subsp. Schizaphis graminum (strain Sg) protein is Cell division topological specificity factor.